Consider the following 537-residue polypeptide: Organic anion transporter 3 (537 aa).

Residues 1–11 (MTFSEILDRVG) lie on the Cytoplasmic side of the membrane. Ser4 bears the Phosphoserine mark. A helical membrane pass occupies residues 12–32 (SMGPFQYLHVTLLALPILGIA). Over 33–123 (NHNLLQIFTA…LVCGSNKLKE (91 aa)) the chain is Extracellular. Residue Asn81 is glycosylated (N-linked (GlcNAc...) asparagine). Residues 124–144 (MAQSVFMAGILVGGPVFGELS) traverse the membrane as a helical segment. The Cytoplasmic portion of the chain corresponds to 145–150 (DRFGRK). The helical transmembrane segment at 151 to 171 (PILTWSYLLLAASGSSAAFSP) threads the bilayer. Over 172–176 (SLTVY) the chain is Extracellular. The helical transmembrane segment at 177–197 (MIFRFLCGCSISGISLSTIIL) threads the bilayer. Residues 198–212 (NVEWVPTSTRAISST) lie on the Cytoplasmic side of the membrane. A helical transmembrane segment spans residues 213 to 233 (TIGYCYTIGQFILPGLAYAVP). Over 234 to 236 (QWR) the chain is Extracellular. Residues 237 to 257 (WLQLSVSAAFFIFSLLSWWVP) form a helical membrane-spanning segment. Residues 258–327 (ESIRWLVLSG…FRVSILRRVT (70 aa)) lie on the Cytoplasmic side of the membrane. A helical membrane pass occupies residues 328-348 (FCLSLAWFATGFAYYSLAMGV). The Extracellular segment spans residues 349–354 (EEFGVN). A helical membrane pass occupies residues 355-375 (IYILQIIFGGVDIPAKFITIL). Residues 376–383 (SISYLGRR) lie on the Cytoplasmic side of the membrane. Residues 384–404 (ITQGFLLILAGVAILALIFVS) traverse the membrane as a helical segment. The Extracellular segment spans residues 405–411 (SEMQLLR). A helical membrane pass occupies residues 412 to 432 (TALAVFGKGCLSGSFSCLFLY). Residues 433–471 (TSELYPTVLRQTGMGISNIWARVGSMIAPLVKITGELQP) lie on the Cytoplasmic side of the membrane. A helical membrane pass occupies residues 472–492 (FIPNVIFGTMTLLGGSAAFFL). The Extracellular portion of the chain corresponds to 493–537 (LETLNRPLPETIEDIQDWYQQTKKTKQEPEAEKASQTIPLKTGGP). Residues 513–537 (QTKKTKQEPEAEKASQTIPLKTGGP) form a disordered region.

It belongs to the major facilitator (TC 2.A.1) superfamily. Organic cation transporter (TC 2.A.1.19) family. In terms of tissue distribution, expressed mainly in kidney. In kidney, detected in almost all parts of the nephron, including macula densa cells. Expressed (at protein level) throughout the renal cortex. Widely distributed in the brain with no large regional differences. Expressed in the choroid plexus (CP, located in the ventricles of the brain). Expressed in developing bone. Weakly expressed in brain and eye.

The protein localises to the basolateral cell membrane. The enzyme catalyses estrone 3-sulfate(out) + glutarate(in) = estrone 3-sulfate(in) + glutarate(out). The catalysed reaction is estrone 3-sulfate(in) + 2-oxoglutarate(out) = estrone 3-sulfate(out) + 2-oxoglutarate(in). It catalyses the reaction taurocholate(out) + glutarate(in) = taurocholate(in) + glutarate(out). It carries out the reaction dehydroepiandrosterone 3-sulfate(out) + glutarate(in) = dehydroepiandrosterone 3-sulfate(in) + glutarate(out). The enzyme catalyses glutarate(in) + 2-oxoglutarate(out) = glutarate(out) + 2-oxoglutarate(in). The catalysed reaction is urate(in) + 2-oxoglutarate(out) = urate(out) + 2-oxoglutarate(in). It catalyses the reaction prostaglandin F2alpha(out) + glutarate(in) = prostaglandin F2alpha(in) + glutarate(out). It carries out the reaction prostaglandin F2alpha(out) + 2-oxoglutarate(in) = prostaglandin F2alpha(in) + 2-oxoglutarate(out). The enzyme catalyses (R)-carnitine(out) + 2-oxoglutarate(in) = (R)-carnitine(in) + 2-oxoglutarate(out). The catalysed reaction is glutarate(in) + (R)-carnitine(out) = glutarate(out) + (R)-carnitine(in). It catalyses the reaction prostaglandin E2(out) + 2-oxoglutarate(in) = prostaglandin E2(in) + 2-oxoglutarate(out). It carries out the reaction prostaglandin E2(out) + glutarate(in) = prostaglandin E2(in) + glutarate(out). The enzyme catalyses urate(in) + glutarate(out) = urate(out) + glutarate(in). The catalysed reaction is taurocholate(out) + 2-oxoglutarate(in) = taurocholate(in) + 2-oxoglutarate(out). It catalyses the reaction dehydroepiandrosterone 3-sulfate(out) + 2-oxoglutarate(in) = dehydroepiandrosterone 3-sulfate(in) + 2-oxoglutarate(out). It carries out the reaction kynurenate(out) + a dicarboxylate(in) = kynurenate(in) + a dicarboxylate(out). The enzyme catalyses (indol-3-yl)acetate(out) + a dicarboxylate(in) = (indol-3-yl)acetate(in) + a dicarboxylate(out). The catalysed reaction is indoxyl sulfate(out) + a dicarboxylate(in) = indoxyl sulfate(in) + a dicarboxylate(out). It catalyses the reaction N-benzoylglycine(out) + a dicarboxylate(in) = N-benzoylglycine(in) + a dicarboxylate(out). It carries out the reaction 3-carboxy-4-methyl-5-propyl-2-furanpropanoate(out) + a dicarboxylate(in) = 3-carboxy-4-methyl-5-propyl-2-furanpropanoate(in) + a dicarboxylate(out). The enzyme catalyses (6R)-L-erythro-5,6,7,8-tetrahydrobiopterin(out) + a dicarboxylate(in) = (6R)-L-erythro-5,6,7,8-tetrahydrobiopterin(in) + a dicarboxylate(out). The catalysed reaction is L-erythro-7,8-dihydrobiopterin(out) + a dicarboxylate(in) = L-erythro-7,8-dihydrobiopterin(in) + a dicarboxylate(out). It catalyses the reaction L-sepiapterin(out) + a dicarboxylate(in) = L-sepiapterin(in) + a dicarboxylate(out). Its activity is regulated as follows. Expression inhibited by androgens such as testosterone. In terms of biological role, functions as an organic anion/dicarboxylate exchanger that couples organic anion uptake indirectly to the sodium gradient. Transports organic anions such as estrone 3-sulfate (E1S) and urate in exchange for dicarboxylates such as glutarate or ketoglutarate (2-oxoglutarate). Plays an important role in the excretion of endogenous and exogenous organic anions, especially from the kidney and the brain. E1S transport is pH- and chloride-dependent and may also involve E1S/cGMP exchange. Responsible for the transport of prostaglandin E2 (PGE2) and prostaglandin F2(alpha) (PGF2(alpha)) in the basolateral side of the renal tubule. Involved in the transport of neuroactive tryptophan metabolites kynurenate and xanthurenate. Functions as a biopterin transporters involved in the uptake and the secretion of coenzymes tetrahydrobiopterin (BH4), dihydrobiopterin (BH2) and sepiapterin to urine, thereby determining baseline levels of blood biopterins. May be involved in the basolateral transport of steviol, a metabolite of the popular sugar substitute stevioside. May participate in the detoxification/ renal excretion of drugs and xenobiotics, such as the histamine H(2)-receptor antagonists fexofenadine and cimetidine, the antibiotic benzylpenicillin (PCG), the anionic herbicide 2,4-dichloro-phenoxyacetate (2,4-D), the diagnostic agent p-aminohippurate (PAH), the antiviral acyclovir (ACV), and the mycotoxin ochratoxin (OTA), by transporting these exogenous organic anions across the cell membrane in exchange for dicarboxylates such as 2-oxoglutarate. May contribute to the release of cortisol in the adrenals. Involved in one of the detoxification systems on the choroid plexus (CP), removes substrates such as E1S or taurocholate (TC), PCG, 2,4-D and PAH, from the cerebrospinal fluid (CSF) to the blood for eventual excretion in urine and bile. Also contributes to the uptake of several other organic compounds such as the prostanoids prostaglandin E(2) and prostaglandin F(2-alpha), L-carnitine, and the therapeutic drugs allopurinol, 6-mercaptopurine (6-MP) and 5-fluorouracil (5-FU). Mediates the transport of PAH, PCG, and the statins pravastatin and pitavastatin, from the cerebrum into the blood circulation across the blood-brain barrier (BBB). Contributes to the renal uptake of potent uremic toxins (indoxyl sulfate (IS), indole acetate (IA), hippurate/N-benzoylglycine (HA) and 3-carboxy-4-methyl-5-propyl-2-furanpropionate (CMPF)), pravastatin, PCG, E1S and dehydroepiandrosterone sulfate (DHEAS), and is partly involved in the renal uptake of temocaprilat (an angiotensin-converting enzyme (ACE) inhibitor). In summary, plays a role in the efflux of drugs and xenobiotics, helping reduce their undesired toxicological effects on the body. The protein is Organic anion transporter 3 (Slc22a8) of Mus musculus (Mouse).